The primary structure comprises 338 residues: Glyceraldehyde-3-phosphate dehydrogenase (338 aa).

Residues 11 to 12 (TI) and Gly111 contribute to the NAD(+) site. Residue 140-142 (SCN) coordinates D-glyceraldehyde 3-phosphate. Residue Cys141 is the Nucleophile of the active site. Residue Arg169 participates in NAD(+) binding. Residue 195 to 196 (HG) participates in D-glyceraldehyde 3-phosphate binding. An NAD(+)-binding site is contributed by Gln302.

Belongs to the glyceraldehyde-3-phosphate dehydrogenase family. In terms of assembly, homotetramer.

It localises to the cytoplasm. The catalysed reaction is D-glyceraldehyde 3-phosphate + phosphate + NADP(+) = (2R)-3-phospho-glyceroyl phosphate + NADPH + H(+). It carries out the reaction D-glyceraldehyde 3-phosphate + phosphate + NAD(+) = (2R)-3-phospho-glyceroyl phosphate + NADH + H(+). Its pathway is carbohydrate degradation; glycolysis; pyruvate from D-glyceraldehyde 3-phosphate: step 1/5. The polypeptide is Glyceraldehyde-3-phosphate dehydrogenase (gap) (Methanobacterium bryantii).